The chain runs to 84 residues: Small ribosomal subunit protein bS18B (84 aa).

The span at 1–10 shows a compositional bias: basic residues; that stretch reads MAVKRAPSKK. The segment at 1 to 20 is disordered; it reads MAVKRAPSKKVRAEQARRPK.

This sequence belongs to the bacterial ribosomal protein bS18 family. Part of the 30S ribosomal subunit. Forms a tight heterodimer with protein bS6.

Binds as a heterodimer with protein bS6 to the central domain of the 16S rRNA, where it helps stabilize the platform of the 30S subunit. The chain is Small ribosomal subunit protein bS18B from Nocardia farcinica (strain IFM 10152).